A 146-amino-acid polypeptide reads, in one-letter code: Deoxyuridine 5'-triphosphate nucleotidohydrolase (146 aa).

Residues 60–62, Asn73, and 77–79 contribute to the substrate site; these read RSG and VID.

It belongs to the dUTPase family. It depends on Mg(2+) as a cofactor.

It catalyses the reaction dUTP + H2O = dUMP + diphosphate + H(+). Its pathway is pyrimidine metabolism; dUMP biosynthesis; dUMP from dCTP (dUTP route): step 2/2. This enzyme is involved in nucleotide metabolism: it produces dUMP, the immediate precursor of thymidine nucleotides and it decreases the intracellular concentration of dUTP so that uracil cannot be incorporated into DNA. The chain is Deoxyuridine 5'-triphosphate nucleotidohydrolase from Tropheryma whipplei (strain TW08/27) (Whipple's bacillus).